Reading from the N-terminus, the 390-residue chain is Tuftelin (390 aa).

Coiled-coil stretches lie at residues 88-126 (DKMTHEKNIDQLKSEVQYIQEARNCLQKLREDISSKLDR) and 163-352 (PSMS…EKQV). Positions 356–383 (NFSTQARAKTENLGSVRISKPPSPKPMP) are disordered.

It belongs to the tuftelin family. As to quaternary structure, interacts with TFIP11. May form oligomers. As to expression, ameloblasts, and also non-odontogenic tissues including kidney, lung, liver and testis.

Its subcellular location is the secreted. Involved in the structural organization of the epidermis. Involved in the mineralization and structural organization of enamel. The chain is Tuftelin (Tuft1) from Mus musculus (Mouse).